The sequence spans 631 residues: MAEETQHNKLAAAKKKLKEYWQKNRPRVPAGVNRNRKTNGSIPETATSGGCQPPGDSATGFHREGPTSSATLKDLESPCQERAVVLDSTSVKISRLKNTIKSLKQQKKQVEHQLEEEKKANNERQKAERVLEVQIQTLIIQKEELNTDLYHMERSLRYFEEESKDLAVRLQHSLQCKGELERALSAVIATEKKKANQLSSCSKAHTEWELEQSLQDQALLKAQLTQLKESFQQLQLERDECAEHIEGERARWHQRMSKMSQEICTLKKEKQDMRWVEQLEWSLSKLKNQTAEPLPPEPPAVPSEVELQHLRKELERVAGELQSQVKNNQHISLLNRRQEERIREQEERLRKQEERLQEQHEKLRQLAKPQSVFEELNNENKSTLQLEQQVKELQEKLGEEHLEVASQQNQQLTAQLSLMALPGEGHGGEHLDSEGEEAPQPMPSVPEDPESREAMSSFMDHLKEKADLSELLKKQELRFIQYWQERCHQKIHHLLSEPGGRAKDAALGGGHHQAGAQGGDEGEAAGAAADGIAAYSNYNNGHRKFLAAAHNSADEPGPGAPAPQELGAADKHGDLREVTLTSSAQGEAREDPLLDKPTAQPIVQDHQEHPGLGSNCCVPLFCWAWLPRRRR.

Residues M1–L72 form a disordered region. The segment covering T38–G50 has biased composition (polar residues). Coiled coils occupy residues V85–L149, E209–G247, and S303–M419. Disordered regions lie at residues P422–S451, A502–E523, and N551–P610. Residues L507 to G519 are compositionally biased toward gly residues. Positions A568 to E577 are enriched in basic and acidic residues.

This sequence belongs to the GOLGA8 family.

The chain is Golgin subfamily A member 8R from Homo sapiens (Human).